The sequence spans 100 residues: UPF0473 protein Csac_1599 (100 aa).

This sequence belongs to the UPF0473 family.

The polypeptide is UPF0473 protein Csac_1599 (Caldicellulosiruptor saccharolyticus (strain ATCC 43494 / DSM 8903 / Tp8T 6331)).